The sequence spans 290 residues: 4-hydroxybenzoate octaprenyltransferase (290 aa).

8 helical membrane-spanning segments follow: residues isoleucine 40–isoleucine 60, leucine 99–leucine 119, threonine 120–phenylalanine 140, phenylalanine 142–alanine 162, glycine 165–tyrosine 185, leucine 215–leucine 235, tryptophan 239–isoleucine 259, and serine 267–phenylalanine 287.

The protein belongs to the UbiA prenyltransferase family. The cofactor is Mg(2+).

It localises to the cell inner membrane. The enzyme catalyses all-trans-octaprenyl diphosphate + 4-hydroxybenzoate = 4-hydroxy-3-(all-trans-octaprenyl)benzoate + diphosphate. The protein operates within cofactor biosynthesis; ubiquinone biosynthesis. In terms of biological role, catalyzes the prenylation of para-hydroxybenzoate (PHB) with an all-trans polyprenyl group. Mediates the second step in the final reaction sequence of ubiquinone-8 (UQ-8) biosynthesis, which is the condensation of the polyisoprenoid side chain with PHB, generating the first membrane-bound Q intermediate 3-octaprenyl-4-hydroxybenzoate. The sequence is that of 4-hydroxybenzoate octaprenyltransferase from Alcanivorax borkumensis (strain ATCC 700651 / DSM 11573 / NCIMB 13689 / SK2).